The following is a 393-amino-acid chain: F-box/kelch-repeat protein At4g19865 (393 aa).

The disordered stretch occupies residues 1-30 (MNFQVEPPEKKKTKNSSPPHSPPSSSSPSL). Positions 27-73 (SPSLSLLPEEIVVHCLARISRLYYPTLSLVSKSFRSILSSTELYATR) constitute an F-box domain. Kelch repeat units lie at residues 148 to 190 (EIYV…FHDG), 191 to 237 (KIYV…RSGV), 239 to 272 (EGKI…ALRS), and 273 to 320 (ECMI…GGSS).

The chain is F-box/kelch-repeat protein At4g19865 from Arabidopsis thaliana (Mouse-ear cress).